Here is a 395-residue protein sequence, read N- to C-terminus: Cyclin-A2 (395 aa).

The interval 1-93 is disordered; sequence MLAEQENQEN…EEAADAPGLR (93 aa). Low complexity predominate over residues 27–60; that stretch reads ALGLLRGGPARPGPAAQAARNGEGRGAAAGQQQQ.

The protein belongs to the cyclin family. Cyclin AB subfamily. As to quaternary structure, interacts with the CDK1 and CDK2 protein kinases to form serine/threonine kinase holoenzyme complexes.

Its subcellular location is the nucleus. It is found in the cytoplasm. Functionally, cyclin which controls both the G1/S and the G2/M transition phases of the cell cycle. Functions through the formation of specific serine/threonine kinase holoenzyme complexes with the cyclin-dependent protein kinases CDK1 and CDK2. The cyclin subunit confers the substrate specificity of these complexes and differentially interacts with and activates CDK1 and CDK2 throughout the cell cycle. The polypeptide is Cyclin-A2 (Gallus gallus (Chicken)).